Consider the following 274-residue polypeptide: Large ribosomal subunit protein uL2 (274 aa).

The interval 223–264 (VAMNPVDHPHGGGEGRTSGGRHPVSPWGVPTKGYKTRSNKRT) is disordered.

Belongs to the universal ribosomal protein uL2 family. As to quaternary structure, part of the 50S ribosomal subunit. Forms a bridge to the 30S subunit in the 70S ribosome.

Its function is as follows. One of the primary rRNA binding proteins. Required for association of the 30S and 50S subunits to form the 70S ribosome, for tRNA binding and peptide bond formation. It has been suggested to have peptidyltransferase activity; this is somewhat controversial. Makes several contacts with the 16S rRNA in the 70S ribosome. This is Large ribosomal subunit protein uL2 from Shewanella denitrificans (strain OS217 / ATCC BAA-1090 / DSM 15013).